The primary structure comprises 178 residues: Large ribosomal subunit protein bL25 (178 aa).

The protein belongs to the bacterial ribosomal protein bL25 family. CTC subfamily. As to quaternary structure, part of the 50S ribosomal subunit; part of the 5S rRNA/L5/L18/L25 subcomplex. Contacts the 5S rRNA. Binds to the 5S rRNA independently of L5 and L18.

This is one of the proteins that binds to the 5S RNA in the ribosome where it forms part of the central protuberance. This is Large ribosomal subunit protein bL25 from Helicobacter acinonychis (strain Sheeba).